Here is a 471-residue protein sequence, read N- to C-terminus: Putative multidrug resistance protein MdtD (471 aa).

Over 1–11 (MTDLPDSTRWQ) the chain is Periplasmic. Residues 12 to 32 (LWIVAFGFFMQSLDTTIVNTA) traverse the membrane as a helical segment. Topologically, residues 33 to 48 (LPSMAQSLGESPLHMH) are cytoplasmic. The helical transmembrane segment at 49-69 (MVIVSYVLTVAVMLPASGWLA) threads the bilayer. Residues 70–76 (DKVGVRN) are Periplasmic-facing. A helical membrane pass occupies residues 77–97 (IFFTAIVLFTLGSLFCALSGT). At 98–101 (LNEL) the chain is on the cytoplasmic side. A helical transmembrane segment spans residues 102 to 124 (LLARALQGVGGAMMVPVGRLTVM). Residues 125-137 (KIVPREQYMAAMT) are Periplasmic-facing. A helical membrane pass occupies residues 138–158 (FVTLPGQVGPLLGPALGGLLV). Topologically, residues 159–164 (EYASWH) are cytoplasmic. The chain crosses the membrane as a helical span at residues 165 to 185 (WIFLINIPVGIIGAIATLMLM). The Periplasmic segment spans residues 186–196 (PNYTMQTRRFD). Residues 197–217 (LSGFLLLAVGMAVLTLALDGS) form a helical membrane-spanning segment. Topologically, residues 218–224 (KGTGLSP) are cytoplasmic. Residues 225-245 (LTIDGLVAVGVVALVLYLLHA) form a helical membrane-spanning segment. At 246-262 (RNNNRALFSLKLFRTRT) the chain is on the periplasmic side. The helical transmembrane segment at 263–283 (FSLGLAGSFAGRIGSGMLPFM) threads the bilayer. At 284–285 (TP) the chain is on the cytoplasmic side. A helical transmembrane segment spans residues 286–306 (VFLQIGLGFSPFHAGLMMIPM). Over 307-341 (VLGSMGMKRIVVQVVNRFGYRRVLVATTLGLSLVT) the chain is Periplasmic. The helical transmembrane segment at 342–362 (LLFMTTALLGWYYVLPFVLFL) threads the bilayer. At 363-395 (QGMVNSTRFSSMNTLTLKDLPDNLASSGNSLLS) the chain is on the cytoplasmic side. A helical transmembrane segment spans residues 396 to 416 (MIMQLSMSIGVTIAGLLLGLF). Residues 417-430 (GSQHVSIDSGTTQT) lie on the Periplasmic side of the membrane. Residues 431-451 (VFMYTWLSMALIIALPAFIFA) traverse the membrane as a helical segment. The Cytoplasmic portion of the chain corresponds to 452 to 471 (RVPNDTHQNVAISRRKRSAQ).

It belongs to the major facilitator superfamily. TCR/Tet family.

It is found in the cell inner membrane. The protein is Putative multidrug resistance protein MdtD of Escherichia coli (strain SE11).